An 82-amino-acid polypeptide reads, in one-letter code: RNA-binding protein Hfq (82 aa).

The Sm domain maps to 11–71 (DTFLNSVRKS…ISTIMPAQPV (61 aa)).

It belongs to the Hfq family. As to quaternary structure, homohexamer.

Its function is as follows. RNA chaperone that binds small regulatory RNA (sRNAs) and mRNAs to facilitate mRNA translational regulation in response to envelope stress, environmental stress and changes in metabolite concentrations. Also binds with high specificity to tRNAs. This is RNA-binding protein Hfq from Caulobacter vibrioides (strain ATCC 19089 / CIP 103742 / CB 15) (Caulobacter crescentus).